Reading from the N-terminus, the 225-residue chain is Biosynthetic peptidoglycan transglycosylase (225 aa).

A helical transmembrane segment spans residues 7–27 (SFLFKMVLILLIAPIVLVGVV).

This sequence belongs to the glycosyltransferase 51 family.

It localises to the cell inner membrane. The catalysed reaction is [GlcNAc-(1-&gt;4)-Mur2Ac(oyl-L-Ala-gamma-D-Glu-L-Lys-D-Ala-D-Ala)](n)-di-trans,octa-cis-undecaprenyl diphosphate + beta-D-GlcNAc-(1-&gt;4)-Mur2Ac(oyl-L-Ala-gamma-D-Glu-L-Lys-D-Ala-D-Ala)-di-trans,octa-cis-undecaprenyl diphosphate = [GlcNAc-(1-&gt;4)-Mur2Ac(oyl-L-Ala-gamma-D-Glu-L-Lys-D-Ala-D-Ala)](n+1)-di-trans,octa-cis-undecaprenyl diphosphate + di-trans,octa-cis-undecaprenyl diphosphate + H(+). It functions in the pathway cell wall biogenesis; peptidoglycan biosynthesis. Peptidoglycan polymerase that catalyzes glycan chain elongation from lipid-linked precursors. This is Biosynthetic peptidoglycan transglycosylase from Vibrio parahaemolyticus serotype O3:K6 (strain RIMD 2210633).